A 550-amino-acid polypeptide reads, in one-letter code: Silent protein UshA(0) (550 aa).

An N-terminal signal peptide occupies residues 1–25 (MKFLKRGVALALLAAFALTTQPAQA). The a divalent metal cation site is built by D41, H43, D84, N116, H217, H252, and Q254. The cysteines at positions 258 and 275 are disulfide-linked. Substrate contacts are provided by residues F429 and 498 to 504 (FNATGGD).

The protein belongs to the 5'-nucleotidase family. A divalent metal cation is required as a cofactor.

It is found in the periplasm. This Salmonella typhimurium (strain LT2 / SGSC1412 / ATCC 700720) protein is Silent protein UshA(0) (ushA).